Here is a 166-residue protein sequence, read N- to C-terminus: DNA polymerase epsilon subunit C (166 aa).

The segment at 112-166 is disordered; sequence SPEIDIESEDEVDEANEPEVGEPEVDEAEVEAEVEAEAAEPETHTLDEPRPESSS. Over residues 115–151 the composition is skewed to acidic residues; the sequence is IDIESEDEVDEANEPEVGEPEVDEAEVEAEVEAEAAE. A compositionally biased stretch (basic and acidic residues) spans 152 to 166; sequence PETHTLDEPRPESSS.

Heterotetramer. Consists of four subunits: POL2, DPB2, DPB3 and DPB4.

Its subcellular location is the nucleus. As accessory component of the DNA polymerase epsilon (DNA polymerase II) participates in chromosomal DNA replication. This Kluyveromyces lactis (strain ATCC 8585 / CBS 2359 / DSM 70799 / NBRC 1267 / NRRL Y-1140 / WM37) (Yeast) protein is DNA polymerase epsilon subunit C (DPB3).